The sequence spans 271 residues: Ribosomal RNA small subunit methyltransferase A (271 aa).

S-adenosyl-L-methionine is bound by residues N18, L20, G45, E66, D91, and N112.

It belongs to the class I-like SAM-binding methyltransferase superfamily. rRNA adenine N(6)-methyltransferase family. RsmA subfamily.

It is found in the cytoplasm. The catalysed reaction is adenosine(1518)/adenosine(1519) in 16S rRNA + 4 S-adenosyl-L-methionine = N(6)-dimethyladenosine(1518)/N(6)-dimethyladenosine(1519) in 16S rRNA + 4 S-adenosyl-L-homocysteine + 4 H(+). Specifically dimethylates two adjacent adenosines (A1518 and A1519) in the loop of a conserved hairpin near the 3'-end of 16S rRNA in the 30S particle. May play a critical role in biogenesis of 30S subunits. The sequence is that of Ribosomal RNA small subunit methyltransferase A from Vibrio atlanticus (strain LGP32) (Vibrio splendidus (strain Mel32)).